We begin with the raw amino-acid sequence, 330 residues long: MMWGAGSPLAWLSAGSGNVNVSSVGPAEGPTGPAAPLPSPKAWDVVLCISGTLVSCENALVVAIIVGTPAFRAPMFLLVGSLAVADLLAGLGLVLHFAAVFCIGSAEMSLVLVGVLAMAFTASIGSLLAITVDRYLSLYNALTYYSETTVTRTYVMLALVWGGALGLGLLPVLAWNCLDGLTTCGVVYPLSKNHLVVLAIAFFMVFGIMLQLYAQICRIVCRHAQQIALQRHLLPASHYVATRKGIATLAVVLGAFAACWLPFTVYCLLGDAHSPPLYTYLTLLPATYNSMINPIIYAFRNQDVQKVLWAVCCCCSSSKIPFRSRSPSDV.

Over 1–42 the chain is Extracellular; that stretch reads MMWGAGSPLAWLSAGSGNVNVSSVGPAEGPTGPAAPLPSPKA. N-linked (GlcNAc...) asparagine glycosylation is present at Asn-20. Residues 43–62 traverse the membrane as a helical segment; the sequence is WDVVLCISGTLVSCENALVV. Residues 63-74 lie on the Cytoplasmic side of the membrane; it reads AIIVGTPAFRAP. Residues 75–98 form a helical membrane-spanning segment; that stretch reads MFLLVGSLAVADLLAGLGLVLHFA. Residues 99–110 lie on the Extracellular side of the membrane; that stretch reads AVFCIGSAEMSL. The helical transmembrane segment at 111–132 threads the bilayer; the sequence is VLVGVLAMAFTASIGSLLAITV. Over 133 to 153 the chain is Cytoplasmic; sequence DRYLSLYNALTYYSETTVTRT. The helical transmembrane segment at 154–173 threads the bilayer; it reads YVMLALVWGGALGLGLLPVL. At 174 to 198 the chain is on the extracellular side; the sequence is AWNCLDGLTTCGVVYPLSKNHLVVL. The helical transmembrane segment at 199-217 threads the bilayer; sequence AIAFFMVFGIMLQLYAQIC. Residues 218–245 lie on the Cytoplasmic side of the membrane; the sequence is RIVCRHAQQIALQRHLLPASHYVATRKG. Residues 246-272 traverse the membrane as a helical segment; it reads IATLAVVLGAFAACWLPFTVYCLLGDA. At 273 to 277 the chain is on the extracellular side; the sequence is HSPPL. A helical membrane pass occupies residues 278 to 299; that stretch reads YTYLTLLPATYNSMINPIIYAF. Residues 300 to 330 are Cytoplasmic-facing; it reads RNQDVQKVLWAVCCCCSSSKIPFRSRSPSDV. Cys-313 carries S-palmitoyl cysteine lipidation. Ser-324, Ser-326, and Ser-328 each carry phosphoserine.

This sequence belongs to the G-protein coupled receptor 1 family. In terms of tissue distribution, expressed predominantly in the central nervous system, and at low levels in the lung, kidney, testis, ovary and eye. Highly expressed in regions of the brain implicated in the Alzheimer disease.

The protein resides in the cell membrane. In terms of biological role, constitutively active G-protein coupled receptor that maintains high 3'-5'-cyclic adenosine monophosphate (cAMP) levels that a plays a role in serveral processes including meiotic arrest in oocytes or neuronal development via activation of numerous intracellular signaling pathways. Acts as an essential activator of thermogenic adipocytes and drives thermogenesis via its intrinsic G(s)-coupling activity without the requirement of a ligand. Has a potential role in modulating a number of brain functions, including behavioral responses to stress, amyloid-beta peptide generation in neurons. Stimulates neurite outgrowth in cerebellar granular neurons modulated via PKA, ERK, and most strongly PI3K-mediated signaling pathways. This is G-protein coupled receptor 3 (GPR3) from Homo sapiens (Human).